A 29-amino-acid chain; its full sequence is Augerpeptide hheTx2 (29 aa).

Contains 4 disulfide bonds. In terms of tissue distribution, expressed by the venom duct.

Its subcellular location is the secreted. This chain is Augerpeptide hheTx2, found in Hastula hectica (Sea snail).